We begin with the raw amino-acid sequence, 434 residues long: Serine--tRNA ligase (434 aa).

230–232 lines the L-serine pocket; that stretch reads TSE. ATP contacts are provided by residues 261 to 263 and V277; that span reads RRE. E284 is a binding site for L-serine. An ATP-binding site is contributed by 348–351; it reads ELTS. Residue T393 coordinates L-serine.

This sequence belongs to the class-II aminoacyl-tRNA synthetase family. Type-1 seryl-tRNA synthetase subfamily. As to quaternary structure, homodimer. The tRNA molecule binds across the dimer.

Its subcellular location is the cytoplasm. It catalyses the reaction tRNA(Ser) + L-serine + ATP = L-seryl-tRNA(Ser) + AMP + diphosphate + H(+). It carries out the reaction tRNA(Sec) + L-serine + ATP = L-seryl-tRNA(Sec) + AMP + diphosphate + H(+). It participates in aminoacyl-tRNA biosynthesis; selenocysteinyl-tRNA(Sec) biosynthesis; L-seryl-tRNA(Sec) from L-serine and tRNA(Sec): step 1/1. Functionally, catalyzes the attachment of serine to tRNA(Ser). Is also able to aminoacylate tRNA(Sec) with serine, to form the misacylated tRNA L-seryl-tRNA(Sec), which will be further converted into selenocysteinyl-tRNA(Sec). This chain is Serine--tRNA ligase, found in Kocuria rhizophila (strain ATCC 9341 / DSM 348 / NBRC 103217 / DC2201).